A 249-amino-acid polypeptide reads, in one-letter code: Orotidine 5'-phosphate decarboxylase (249 aa).

Substrate contacts are provided by residues aspartate 21, lysine 43, 72–81, threonine 128, arginine 193, glutamine 204, glycine 224, and arginine 225; that span reads DLKLYDIPET. The active-site Proton donor is lysine 74.

It belongs to the OMP decarboxylase family. Type 1 subfamily. As to quaternary structure, homodimer.

It catalyses the reaction orotidine 5'-phosphate + H(+) = UMP + CO2. Its pathway is pyrimidine metabolism; UMP biosynthesis via de novo pathway; UMP from orotate: step 2/2. Functionally, catalyzes the decarboxylation of orotidine 5'-monophosphate (OMP) to uridine 5'-monophosphate (UMP). The chain is Orotidine 5'-phosphate decarboxylase from Desulfosudis oleivorans (strain DSM 6200 / JCM 39069 / Hxd3) (Desulfococcus oleovorans).